Consider the following 194-residue polypeptide: NAD(P)H-quinone oxidoreductase subunit I (194 aa).

2 4Fe-4S ferredoxin-type domains span residues 55–84 (GRIH…VDWE) and 95–124 (NHYS…MTEE). [4Fe-4S] cluster contacts are provided by Cys-64, Cys-67, Cys-70, Cys-74, Cys-104, Cys-107, Cys-110, and Cys-114. The tract at residues 173–194 (DLPANAPRPGARPEDLVEKTEA) is disordered. Residues 183–194 (ARPEDLVEKTEA) are compositionally biased toward basic and acidic residues.

This sequence belongs to the complex I 23 kDa subunit family. In terms of assembly, NDH-1 is composed of at least 11 different subunits. The cofactor is [4Fe-4S] cluster.

It localises to the cellular thylakoid membrane. The enzyme catalyses a plastoquinone + NADH + (n+1) H(+)(in) = a plastoquinol + NAD(+) + n H(+)(out). It catalyses the reaction a plastoquinone + NADPH + (n+1) H(+)(in) = a plastoquinol + NADP(+) + n H(+)(out). Its function is as follows. NDH-1 shuttles electrons from an unknown electron donor, via FMN and iron-sulfur (Fe-S) centers, to quinones in the respiratory and/or the photosynthetic chain. The immediate electron acceptor for the enzyme in this species is believed to be plastoquinone. Couples the redox reaction to proton translocation, and thus conserves the redox energy in a proton gradient. The sequence is that of NAD(P)H-quinone oxidoreductase subunit I from Nostoc sp. (strain PCC 7120 / SAG 25.82 / UTEX 2576).